The following is a 591-amino-acid chain: Alpha-(1-&gt;6)-mannopyranosyltransferase Rv1459c (591 aa).

The next 13 membrane-spanning stretches (helical) occupy residues 40–60 (FGAT…ARPV), 80–100 (VSLT…LMLG), 117–137 (TLLL…KDVY), 201–221 (IVAA…LIVW), 235–255 (VSAL…VAGI), 259–279 (ALML…LDMA), 321–341 (EWGP…SSQV), 367–387 (LLLA…ILGW), 408–428 (WMSP…LLGL), 441–461 (AIGV…VLRG), 473–493 (LAVT…WAII), 502–522 (PGFR…GPTA), and 527–547 (FALF…ILLI). The disordered stretch occupies residues 569-591 (ESASKTPATRRPTAAPDAYADST). Low complexity predominate over residues 574–584 (TPATRRPTAAP).

This sequence belongs to the MptA/B family.

The protein localises to the membrane. In terms of biological role, catalyzes the addition of alpha-(1-&gt;6)-mannose residue. In Mycobacterium tuberculosis (strain ATCC 25618 / H37Rv), this protein is Alpha-(1-&gt;6)-mannopyranosyltransferase Rv1459c.